The chain runs to 112 residues: Mu-ctenitoxin-Pn1a (112 aa).

Residues 1–19 (MKLLGIFLVASFAFVLSFG) form the signal peptide. The propeptide occupies 20–33 (EEMIEGENPLEDQR). 7 disulfides stabilise this stretch: C39–C56, C46–C62, C53–C85, C55–C73, C64–C71, C91–C106, and C102–C110. G111 carries the post-translational modification Glycine amide.

It belongs to the neurotoxin 04 (omega-agtx) family. 02 (Tx1) subfamily. In terms of processing, contains 7 disulfide bonds. Expressed by the venom gland.

Its subcellular location is the secreted. Its function is as follows. Reversible inhibitor of neuronal sodium channels (Nav1.2/ SCN2A) that binds in proximity to site 1 and displays increasing affinity as the membrane potential is depolarized. Induces excitatory symptoms and spastic paralysis in mice. The sequence is that of Mu-ctenitoxin-Pn1a from Phoneutria nigriventer (Brazilian armed spider).